We begin with the raw amino-acid sequence, 1289 residues long: uncharacterized protein (1289 aa).

Residues 1-23 form the signal peptide; that stretch reads MRKYTVIASILLSFLSVLSGGHH. The LTD domain occupies 141–277; that stretch reads EGYQADLAHI…VVISTNTGKD (137 aa).

This is an uncharacterized protein from Bacillus subtilis (strain 168).